The primary structure comprises 555 residues: Glycerol dehydratase large subunit (555 aa).

The protein belongs to the diol/glycerol dehydratase large subunit family. In terms of assembly, probably consists of three subunits: large, medium, and small. Adenosylcob(III)alamin serves as cofactor.

It carries out the reaction glycerol = 3-hydroxypropanal + H2O. This chain is Glycerol dehydratase large subunit (dhaB), found in Citrobacter freundii.